The chain runs to 206 residues: Urease accessory protein UreG (206 aa).

11 to 18 lines the GTP pocket; that stretch reads GPVGSGKT.

It belongs to the SIMIBI class G3E GTPase family. UreG subfamily. In terms of assembly, homodimer. UreD, UreF and UreG form a complex that acts as a GTP-hydrolysis-dependent molecular chaperone, activating the urease apoprotein by helping to assemble the nickel containing metallocenter of UreC. The UreE protein probably delivers the nickel.

It is found in the cytoplasm. In terms of biological role, facilitates the functional incorporation of the urease nickel metallocenter. This process requires GTP hydrolysis, probably effectuated by UreG. In Mycolicibacterium gilvum (strain PYR-GCK) (Mycobacterium gilvum (strain PYR-GCK)), this protein is Urease accessory protein UreG.